A 258-amino-acid polypeptide reads, in one-letter code: Short-chain dehydrogenase/reductase FrzI (258 aa).

Residues Ile-21, Asn-41, and Asn-94 each coordinate NADP(+). Active-site proton donor residues include Ser-143 and Ser-144. NADP(+)-binding residues include Tyr-157, Lys-161, Val-191, and Thr-193. Tyr-157 functions as the Proton acceptor in the catalytic mechanism. The active-site Lowers pKa of active site Tyr is Lys-161.

Belongs to the short-chain dehydrogenases/reductases (SDR) family.

The catalysed reaction is (1S,3S,6S,7S,8R)-7-hydroxy-6-[(4-methoxyphenyl)methyl]-3-(methylamino)-5-azatricyclo[6.3.1.0(1,5)]dodecan-9-one + NADPH + H(+) = (1S,3S,6S,7S,8S,9S)-6-[(4-methoxyphenyl)methyl]-3-(methylamino)-5-azatricyclo[6.3.1.0(1,5)]dodecane-7,9-diol + NADP(+). Its pathway is secondary metabolite biosynthesis. Functionally, short-chain dehydrogenase/reductase; part of the gene cluster that mediates the biosynthesis of the alkaloid (-)-FR901483, a potent immunosuppressant that shows efficacy in animal models and a probable inhibitor of purine nucleotide biosynthesis by targeting phosphoribosylpyrophosphate amidotransferase (PPAT). Within the pathway, FrzI catalyzes the formation of dephospho-(-)-FR901483 from the aza-tricyclic intermediate produced by FrzH. The biosynthesis of (-)-FR901483 starts with the condensation of two L-tyrosines to yield (S,S)-dityrosyl-piperazine. This process occurs in 3 steps with the non-canonical nonribosomal peptide synthetase FrzA catalyzing the reduction of L-tyrosine into L-tyrosinal, the spontaneous condensation of 2 L-tyrosinal units, and the subsequent reduction by the NmrA-like family domain-containing oxidoreductase FrzB. The cytochrome P450 monooxygenase FrzC then performs coupling between N10 and C1' to morph the piperazine into a 1,4-diazabicyclo[3.2.1]octane spiro-fused to a 2,5-cyclohexadienone. The dienone portion is further reduced to cyclohexanone by the flavin-dependent reductase FrzD. The methyltranserases (MTs) FrzE and FrzF are then involved in the methylation at the C10' amine and the C4 phenolic oxygen, respectively. The order of the two MTs appear to be interchangeable. Cleavage of the C9-N10' bond by the dioxygenase FrzG then leads to formation of a conjugated iminium. In addition to the oxidation of C9, an additional dehydrogenation between C7 and C8 can occur to give a likely shunt product. The next biosynthetic step is the intramolecular aldol condensation catalyzed by the newly identified aldolase FrzH to yield an aza-tricyclic product with the formation of a C9-C3' bond. The short-chain dehydrogenase/reductase FrzI then produces dephospho-(-)-FR901483 that is phosphorylated at C4'-OH into (-)-FR901483 by the phosphotransferase FrzJ. The polypeptide is Short-chain dehydrogenase/reductase FrzI (Cladobotryum sp).